A 723-amino-acid polypeptide reads, in one-letter code: MQEVKCLTLKDLLGVRTLVNKTGSDDAASMNDHKENICMDRRKMTPLKSESLTAALNGHGKISSPEITHITPIKLTEKAHPDPWTPTANLKMLINAASPDIRDREMKKTLFKPIENKGKIAEEEEEEELDDSCQYEALDESERRPSRKQKSLGLLCQKFLALYPDYPESSESINISLDEVATCLGVERRRIYDIVNVLESLMLVSRKAKNMYVWHGRSRLPQTLQGLLQAGRDQHYDLLMDQREGNGLHAVQHVQNAHAASSRRKDKSLRIMSQKFVMLFLVSKTQTVTLDMAAKILIEEGQEESYDSKYKTKVRRLYDIANVLTSLNLIKKIHMREEKTRKPVFKWIGPGNFQSSSNSDDLRGQISNSGTERREKMARHSSFQVITAPPVNQRLISSAPSTPHRYSTDEPVDYSRKSGNNSAVCRLQFGDGVHPSVSPAVPSALASLAMPLQADLMPVPASFSHPLAILPQTPLLMLYSGNISDGASSLRKRERSEEDDHQTTKCRRRSASIESDTVESESLSSSTRRSPVCSPEGSPWDEASFGGLHEDDVAASSSKDALLSPHYLYVPNTAGLNSFNFLLPAGHAQGGVPAVAMPYFVVQSPLIAGAMPTSSTEGAAGFSVPTVLSPAQFVMAGGAYGVTEILQSPEHHGNVPATTSSPRAEESPKPAQTQTPVTPKEASLGSKSFFETPGAFGSLVNQSAARKRGSAQRRLDIGHTAAN.

Positions 121–146 are disordered; the sequence is AEEEEEEELDDSCQYEALDESERRPS. Residues 122–139 are compositionally biased toward acidic residues; sequence EEEEEEELDDSCQYEALD. 2 consecutive DNA-binding regions follow at residues 147–216 and 264–349; these read RKQK…VWHG and RKDK…KWIG. 2 stretches are compositionally biased toward polar residues: residues 356–370 and 395–405; these read SSNS…SNSG and LISSAPSTPHR. Disordered stretches follow at residues 356-379, 395-417, 489-546, 650-689, and 702-723; these read SSNS…KMAR, LISS…YSRK, SLRK…ASFG, EHHG…SKSF, and QSAA…TAAN. Over residues 494 to 503 the composition is skewed to basic and acidic residues; that stretch reads ERSEEDDHQT. Over residues 520-535 the composition is skewed to low complexity; the sequence is SESLSSSTRRSPVCSP.

This sequence belongs to the E2F/DP family. As to quaternary structure, homodimer and heterodimer: mainly forms homodimers and, to a lesser extent, heterodimers with e2f8.

The protein resides in the nucleus. In terms of biological role, atypical E2F transcription factor that participates in various processes such as angiogenesis and polyploidization of specialized cells. Mainly acts as a transcription repressor that binds DNA independently of DP proteins and specifically recognizes the E2 recognition site 5'-TTTC[CG]CGC-3'. Directly represses transcription of classical E2F transcription factors such as e2f1. Acts as a regulator of S-phase by recognizing and binding the E2-related site 5'-TTCCCGCC-3' and mediating repression of G1/S-regulated genes. Acts as a promoter of sprouting angiogenesis, possibly by acting as a transcription activator and promoting expression of vegfa. The protein is Transcription factor E2F7 (e2f7) of Danio rerio (Zebrafish).